The primary structure comprises 1034 residues: Protein argonaute 2 (1034 aa).

Residues 1-201 are disordered; that stretch reads MEHERGGGGR…PMRRPDGGGS (201 aa). Over residues 18 to 125 the composition is skewed to gly residues; the sequence is GGRGGGGGDG…ESGGGGGRGG (108 aa). Positions 172–187 are enriched in low complexity; the sequence is VVRVQPPAPPVAVSRS. Residues 391–504 form the PAZ domain; the sequence is PVLDLVQKSV…VPIELCDLLE (114 aa). The Piwi domain occupies 688-989; the sequence is LLFCPMSDQH…AAYRGRLYYE (302 aa).

Belongs to the argonaute family. Ago subfamily.

Its function is as follows. Probably involved in the RNA silencing pathway. May bind to short RNAs such as microRNAs (miRNAs) or short interfering RNAs (siRNAs), and represses the translation of mRNAs which are complementary to them. This is Protein argonaute 2 (AGO2) from Oryza sativa subsp. japonica (Rice).